Reading from the N-terminus, the 596-residue chain is Succinate dehydrogenase flavoprotein subunit (596 aa).

FAD contacts are provided by residues 18–23 (GAGGAG), 41–56 (SKLFPTRSHTVAAQGG), and D225. H49 bears the Tele-8alpha-FAD histidine mark. H246 and T258 together coordinate substrate. R290 acts as the Proton acceptor in catalysis. H357 serves as a coordination point for substrate. FAD is bound at residue E391. R402 is a substrate binding site. 407-408 (SL) serves as a coordination point for FAD.

It belongs to the FAD-dependent oxidoreductase 2 family. FRD/SDH subfamily. As to quaternary structure, part of an enzyme complex containing four subunits: a flavoprotein, an iron-sulfur, cytochrome b-556, and a hydrophobic anchor protein. Requires FAD as cofactor.

It is found in the cell inner membrane. It catalyses the reaction a quinone + succinate = fumarate + a quinol. It functions in the pathway carbohydrate metabolism; tricarboxylic acid cycle; fumarate from succinate (bacterial route): step 1/1. The protein is Succinate dehydrogenase flavoprotein subunit (sdhA) of Rickettsia bellii (strain RML369-C).